Here is a 282-residue protein sequence, read N- to C-terminus: Small ribosomal subunit protein uS3 (282 aa).

A KH type-2 domain is found at 43–111 (IRQLMSTGME…QVQLNILEVK (69 aa)). Residues 218–282 (QQAASAPSRG…AAVATEGSDA (65 aa)) are disordered. Residues 230–262 (PRRDGDDRGPRRENSGPRRDGGNLRSQRNDRNE) show a composition bias toward basic and acidic residues. Over residues 263-276 (NAAVEAAPAAAAVA) the composition is skewed to low complexity.

It belongs to the universal ribosomal protein uS3 family. Part of the 30S ribosomal subunit. Forms a tight complex with proteins S10 and S14.

In terms of biological role, binds the lower part of the 30S subunit head. Binds mRNA in the 70S ribosome, positioning it for translation. In Renibacterium salmoninarum (strain ATCC 33209 / DSM 20767 / JCM 11484 / NBRC 15589 / NCIMB 2235), this protein is Small ribosomal subunit protein uS3.